The chain runs to 622 residues: Neuronal acetylcholine receptor subunit alpha-4 (622 aa).

A signal peptide spans 1 to 23 (MGFLVSKGNLLLLLCASIFPAFG). Over 24 to 237 (HVETRAHAEE…ITYSFIIRRL (214 aa)) the chain is Extracellular. N-linked (GlcNAc...) asparagine glycosylation is present at Asn-52. Val-71 and Glu-73 together coordinate Ca(2+). An N-linked (GlcNAc...) asparagine glycan is attached at Asn-102. 2 cysteine pairs are disulfide-bonded: Cys-156-Cys-170 and Cys-220-Cys-221. A helical transmembrane segment spans residues 238–262 (PLFYTINLIIPCLLISCLTVLVFYL). The S-palmitoyl cysteine moiety is linked to residue Cys-266. A run of 2 helical transmembrane segments spans residues 270–288 (ITLC…LLIT) and 304–325 (YLLF…VLNV). Topologically, residues 326-595 (HHRSPRTHTM…WKYVAMVIDR (270 aa)) are cytoplasmic. Disordered regions lie at residues 380–477 (WSET…TEEG) and 497–516 (QTNG…LNEE). A compositionally biased stretch (low complexity) spans 390-407 (TTSSSPSPQSNEPSPTSS). Polar residues-rich tracts occupy residues 450 to 472 (SDTQ…YSPN) and 497 to 508 (QTNGHSSASPAS). A helical membrane pass occupies residues 596 to 614 (IFLWMFIIVCLLGTVGLFL).

It belongs to the ligand-gated ion channel (TC 1.A.9) family. Acetylcholine receptor (TC 1.A.9.1) subfamily. Alpha-4/CHRNA4 sub-subfamily. As to quaternary structure, neuronal AChR is composed of two different types of subunits: alpha and beta. CHRNA4 forms heteropentameric neuronal acetylcholine receptors with CHRNB2 and CHRNB4, as well as CHRNA5 and CHRNB3 as accesory subunits. Found in two major stoichiometric forms, LS (low agonist sensitivity): (CHRNA4)3:(CHRNB2)2 and HS (high agonist sensitivity): (CHRNA4)2:(CHRNB2)3, the two stoichiometric forms differ in their unitary conductance, calcium permeability, ACh sensitivity and potentiation by divalent cation. Cells produce predominantly an (CHRNA4)3:(CHRNB2)2 nAChR. The (CHRNA4)2:(CHRNB2)3 expression is selectively up-regulated by nicotine and has lower single channel conductance and calcium permeability. In the striatum, also forms CHRNA4:CHRNA6:CHRNB2 complexes. Also found in the stoichiometric form: (CHRNA4:CHRNB2)2:CHRNB3.

It localises to the synaptic cell membrane. The protein localises to the cell membrane. The enzyme catalyses Ca(2+)(in) = Ca(2+)(out). The catalysed reaction is K(+)(in) = K(+)(out). It carries out the reaction Na(+)(in) = Na(+)(out). Activated by a myriad of ligands such as acetylcholine, cytisine, nicotine, choline and epibatidine. Channel potentiation by calcium is stoichiometry-selective, CHRNA4:CHRNB2 nACh receptor is achieved by calcium association with topographically distinct sites framed by anionic residues within the CHRNA4 subunit and between the CHRNA4 and CHRNB2 subunits. nAChR activity is inhibited by the antagonist alpha-conotoxins BuIA, PnIA, GID and MII, small disulfide-constrained peptides from cone snails. Functionally, component of neuronal acetylcholine receptors (nAChRs) that function as pentameric, ligand-gated cation channels with high calcium permeability among other activities. nAChRs are excitatory neurotrasnmitter receptors formed by a collection of nAChR subunits known to mediate synaptic transmission in the nervous system and the neuromuscular junction. Each nAchR subunit confers differential attributes to channel properties, including activation, deactivation and desensitization kinetics, pH sensitivity, cation permeability, and binding to allosteric modulators. CHRNA4 forms heteropentameric neuronal acetylcholine receptors with CHRNB2 and CHRNB4, as well as CHRNA5 and CHRNB3 as accesory subunits. Is the most abundant nAChR subtype expressed in the central nervous system. Found in two major stoichiometric forms,(CHRNA4)3:(CHRNB2)2 and (CHRNA4)2:(CHRNB2)3, the two stoichiometric forms differ in their unitary conductance, calcium permeability, ACh sensitivity and potentiation by divalent cation. Involved in the modulation of calcium-dependent signaling pathways, influences the release of neurotransmitters, including dopamine, glutamate and GABA. The sequence is that of Neuronal acetylcholine receptor subunit alpha-4 (CHRNA4) from Gallus gallus (Chicken).